Reading from the N-terminus, the 541-residue chain is Transmembrane protein 87A (541 aa).

An N-terminal signal peptide occupies residues 1-26; the sequence is MAAASFQPLKCLLLWVFFVITPPVKA. The Lumenal portion of the chain corresponds to 27 to 209; the sequence is VPEPGIWTVP…HGFISASDWP (183 aa). N-linked (GlcNAc...) asparagine glycans are attached at residues Asn52, Asn109, Asn148, and Asn189. 2 cysteine pairs are disulfide-bonded: Cys65–Cys116 and Cys82–Cys416. The chain crosses the membrane as a helical span at residues 210–230; sequence LMIFYMVMCIMYILLALLWFI. Over 231 to 241 the chain is Cytoplasmic; the sequence is WSACYWKDLLR. Residues 242-262 form a helical membrane-spanning segment; it reads IQFWIAAVIFLGMLEKAVYYA. Over 263 to 293 the chain is Lumenal; the sequence is EYQNTDNTGVSSHGLLIFAELISSIKRTLAR. The chain crosses the membrane as a helical span at residues 294-314; the sequence is LLVTIVSLGYGIIKPRLGAVM. At 315-316 the chain is on the cytoplasmic side; sequence HR. The chain crosses the membrane as a helical span at residues 317–337; that stretch reads VVGMGVLYFVFAAVEGVMRII. Over 338–344 the chain is Lumenal; that stretch reads GAKEYDL. The helical transmembrane segment at 345–365 threads the bilayer; it reads VLLAGIPLALLDSGLCWWIFV. The Cytoplasmic segment spans residues 366-384; that stretch reads SLAQTMKTLKLRKNTVKYS. The chain crosses the membrane as a helical span at residues 385–405; that stretch reads LYRHFTNTLIFAILASIIFMI. Residues 406–422 are Lumenal-facing; the sequence is WRTKKFQLVDCQADWME. The helical transmembrane segment at 423-443 threads the bilayer; that stretch reads LWVDDAYWRFLFFIILLVIMF. The Cytoplasmic segment spans residues 444 to 541; the sequence is LWRPSANNQR…MTKYEMSKIE (98 aa).

Belongs to the LU7TM family. TMEM87 subfamily.

Its subcellular location is the cell membrane. The protein resides in the golgi apparatus membrane. Its function is as follows. Potential monoatomic ion channel gated by mechanical force, implicated in normal touch sensitivity through the generation of mechanically activated currents. However, a direct channel activity is debated and an alternative could be that it functions as a chaperone for an unidentified mechanosensitive ion channel. Could also be involved in cell mechanosensitivity regulating cell adhesion and migration. May also be involved in retrograde transport from endosomes to the trans-Golgi network (TGN). This chain is Transmembrane protein 87A, found in Xenopus tropicalis (Western clawed frog).